Here is a 242-residue protein sequence, read N- to C-terminus: Small ribosomal subunit protein uS2 (242 aa).

Belongs to the universal ribosomal protein uS2 family.

This chain is Small ribosomal subunit protein uS2, found in Shewanella pealeana (strain ATCC 700345 / ANG-SQ1).